Consider the following 211-residue polypeptide: Large ribosomal subunit protein bL25 (211 aa).

The disordered stretch occupies residues 186–211 (GRALQSMDAAESAVEQPGEQPATAAG).

It belongs to the bacterial ribosomal protein bL25 family. CTC subfamily. Part of the 50S ribosomal subunit; part of the 5S rRNA/L5/L18/L25 subcomplex. Contacts the 5S rRNA. Binds to the 5S rRNA independently of L5 and L18.

This is one of the proteins that binds to the 5S RNA in the ribosome where it forms part of the central protuberance. This chain is Large ribosomal subunit protein bL25, found in Gloeobacter violaceus (strain ATCC 29082 / PCC 7421).